Reading from the N-terminus, the 162-residue chain is NADPH-dependent 7-cyano-7-deazaguanine reductase (162 aa).

Residue cysteine 53 is the Thioimide intermediate of the active site. Catalysis depends on aspartate 60, which acts as the Proton donor. Residues 75-77 (VES) and 94-95 (HE) contribute to the substrate site.

It belongs to the GTP cyclohydrolase I family. QueF type 1 subfamily.

The protein resides in the cytoplasm. It carries out the reaction 7-aminomethyl-7-carbaguanine + 2 NADP(+) = 7-cyano-7-deazaguanine + 2 NADPH + 3 H(+). Its pathway is tRNA modification; tRNA-queuosine biosynthesis. Functionally, catalyzes the NADPH-dependent reduction of 7-cyano-7-deazaguanine (preQ0) to 7-aminomethyl-7-deazaguanine (preQ1). This Streptococcus mutans serotype c (strain ATCC 700610 / UA159) protein is NADPH-dependent 7-cyano-7-deazaguanine reductase.